Reading from the N-terminus, the 249-residue chain is MAGHSKWSNIKHRKAAQDAKRGKIFTKLIREITVSAREGGGDPETNPRLRAAIDKALSNNMKRDTIDTAVKRGSGDLEGDNVDELTYEGYGPSGVAVLLECMTDNRNRTVSDVRHAFSKLGGNLGTDGSVAYLFNKKGVISYSDGVTEEQVMEPALEAGAEDILAYDEGSIDVITSPENFGAVKDALDAKGLEASNAEVTQVPDTRVDLDEESARTFLKLLDALEDLDDVQNVYHNADISDEIIARLDD.

Belongs to the TACO1 family.

The protein localises to the cytoplasm. The chain is Probable transcriptional regulatory protein IL1088 from Idiomarina loihiensis (strain ATCC BAA-735 / DSM 15497 / L2-TR).